Here is a 91-residue protein sequence, read N- to C-terminus: Small ribosomal subunit protein bS20 (91 aa).

The protein belongs to the bacterial ribosomal protein bS20 family.

Binds directly to 16S ribosomal RNA. This chain is Small ribosomal subunit protein bS20, found in Wolinella succinogenes (strain ATCC 29543 / DSM 1740 / CCUG 13145 / JCM 31913 / LMG 7466 / NCTC 11488 / FDC 602W) (Vibrio succinogenes).